A 297-amino-acid chain; its full sequence is MTFKRFSPLSSTSRYARLLAVASGLVAAAALATPSAVAAPEAESKATVSQLADASSAILAADVAGTAWYTEASTGKIVLTADSTVSKAELAKVSNALAGSKAKLTVKRAEGKFTPLIAGGEAITTGGSRCSLGFNVSVNGVAHALTAGHCTNISASWSIGTRTGTSFPNNDYGIIRHSNPAAADGRVYLYNGSYQDITTAGNAFVGQAVQRSGSTTGLRSGSVTGLNATVNYGSSGIVYGMIQTNVCAEPGDSGGSLFAGSTALGLTSGGSGNCRTGGTTFYQPVTEALSAYGATVL.

A signal peptide spans 1-38 (MTFKRFSPLSSTSRYARLLAVASGLVAAAALATPSAVA). A propeptide spanning residues 39-115 (APEAESKATV…VKRAEGKFTP (77 aa)) is cleaved from the precursor. A disulfide bond links Cys130 and Cys150. Residues His149, Asp171, and Ser253 each act as charge relay system in the active site. An intrachain disulfide couples Cys247 to Cys274.

Belongs to the peptidase S1 family. As to quaternary structure, monomer.

It catalyses the reaction Hydrolysis of proteins with specificity similar to chymotrypsin.. Has a primary specificity for large aliphatic or aromatic amino acids. This Streptomyces griseus protein is Streptogrisin-A (sprA).